Reading from the N-terminus, the 81-residue chain is Lantipeptide prochlorosin 1.1 (81 aa).

Residues 1–65 constitute a propeptide that is removed on maturation; the sequence is MSEEQLKAFI…DDDLEGVAGG (65 aa). A cross-link (beta-methyllanthionine (Cys-Thr)) is located at residues 68-72; it reads CVQGT. The segment at residues 77–81 is a cross-link (beta-methyllanthionine (Thr-Cys)); sequence TINVC.

Post-translationally, cross-links are proved in vitro, when coepressed in E.coli with the ProcM lanthionine synthetase. The beta-methyllanthionine residues have a DL configuration (with 2S,3S,6R stereochemistry). In terms of processing, maturation of prochlorosin involves the enzymatic conversion of Thr, and Ser into dehydrated AA and the formation of thioether bonds with cysteines. This is followed by membrane translocation and cleavage of the modified precursor.

The protein localises to the secreted. In terms of biological role, lanthionine-containing peptide (lantipeptide) with unknown function. Does not show antibiotic activity against Lactococcus lactis 117 and Bacillus subtilis 6633 bacteria. Organisms that produce this peptide live in oligotrophic environments at very dilute concentrations, suggesting this peptide is not secreted to influence other bacteria. This is Lantipeptide prochlorosin 1.1 from Prochlorococcus marinus (strain MIT 9313).